Here is a 178-residue protein sequence, read N- to C-terminus: MRVKTFVILCCALQYVAYTNANINDFDEDYFGSDVTVQSSNTTDEIIRDASGAVIEEEITTKKMQRKNKNHGILGKNEKMIKTFVITTDSDGNESIVEEDVLMKTLSDGTVAQSYVAADAGAYSQSGPYVSNSGYSTHQGYRSDFASAAVGAGAGAGAAAGSGAGAGAGYGAASGAGA.

Positions 1–21 (MRVKTFVILCCALQYVAYTNA) are cleaved as a signal peptide. The interval 149–178 (AVGAGAGAGAAAGSGAGAGAGYGAASGAGA) is highly repetitive.

As to quaternary structure, silk fibroin elementary unit consists in a disulfide-linked heavy and light chain and a p25 glycoprotein in molar ratios of 6:6:1. This results in a complex of approximately 2.3 MDa. In terms of processing, the interchain disulfide bridge is essential for the intracellular transport and secretion of fibroin. Produced exclusively in the posterior (PSG) section of silk glands, which are essentially modified salivary glands.

Functionally, core component of the silk filament; a strong, insoluble and chemically inert fiber. The sequence is that of Fibroin heavy chain (FIBH) from Bombyx mandarina (Wild silk moth).